Here is a 124-residue protein sequence, read N- to C-terminus: Large ribosomal subunit protein bL17 (124 aa).

It belongs to the bacterial ribosomal protein bL17 family. In terms of assembly, part of the 50S ribosomal subunit. Contacts protein L32.

This Trichlorobacter lovleyi (strain ATCC BAA-1151 / DSM 17278 / SZ) (Geobacter lovleyi) protein is Large ribosomal subunit protein bL17.